We begin with the raw amino-acid sequence, 122 residues long: Holo-[acyl-carrier-protein] synthase (122 aa).

Asp9 and Glu58 together coordinate Mg(2+).

Belongs to the P-Pant transferase superfamily. AcpS family. Requires Mg(2+) as cofactor.

It localises to the cytoplasm. The enzyme catalyses apo-[ACP] + CoA = holo-[ACP] + adenosine 3',5'-bisphosphate + H(+). Functionally, transfers the 4'-phosphopantetheine moiety from coenzyme A to a Ser of acyl-carrier-protein. This Chlamydia felis (strain Fe/C-56) (Chlamydophila felis) protein is Holo-[acyl-carrier-protein] synthase.